The following is a 655-amino-acid chain: A-type voltage-gated potassium channel KCND3 (655 aa).

The Cytoplasmic segment spans residues 1–182 (MAAGVAAWLP…FENPHTSTLA (182 aa)). An interaction with KCNIP1 and KCNIP2 region spans residues 6-21 (AAWLPFARAAAIGWMP). The interval 70 to 78 (EKEFFFNED) is interaction with KCNIP1. Zn(2+) contacts are provided by histidine 104, cysteine 110, cysteine 131, and cysteine 132. The residue at position 153 (serine 153) is a Phosphoserine. A helical transmembrane segment spans residues 183–204 (LVFYYVTGFFIAVSVITNVVET). Topologically, residues 205-223 (VPCGTVPGSKELPCGERYS) are extracellular. Residues 224–246 (VAFFCLDTACVMIFTVEYLLRLF) traverse the membrane as a helical segment. The Cytoplasmic portion of the chain corresponds to 247 to 253 (AAPSRYR). Residues 254-277 (FIRSVMSIIDVVAIMPYYIGLVMT) form a helical membrane-spanning segment. At 278–283 (NNEDVS) the chain is on the extracellular side. The chain crosses the membrane as a helical; Voltage-sensor span at residues 284-306 (GAFVTLRVFRVFRIFKFSRHSQG). The Cytoplasmic segment spans residues 307–318 (LRILGYTLKSCA). Residues 319 to 343 (SELGFLLFSLTMAIIIFATVMFYAE) form a helical membrane-spanning segment. Residues 344 to 352 (KGSSASKFT) are Extracellular-facing. An intramembrane region (helical) is located at residues 353–366 (SIPASFWYTIVTMT). The K(+) site is built by threonine 367, leucine 368, glycine 369, and tyrosine 370. The Selectivity filter motif lies at 367–372 (TLGYGD). An intramembrane segment occupies 367–374 (TLGYGDMV). A helical membrane pass occupies residues 378–400 (IAGKIFGSICSLSGVLVIALPVP). The Cytoplasmic portion of the chain corresponds to 401-655 (VIVSNFSRIY…ASNVVKVSAL (255 aa)). Residue threonine 459 is modified to Phosphothreonine. The interval 470-487 (SLIESQHHHLLHCLEKTT) is interaction with KCNIP1 and KCNIP2. The segment at 472–487 (IESQHHHLLHCLEKTT) is mediates dendritic targeting. Residues 525 to 548 (MQNYPSTRSPSLSSHPGLTTTCCS) show a composition bias toward polar residues. The tract at residues 525–565 (MQNYPSTRSPSLSSHPGLTTTCCSRRSKKTTHLPNSNLPAT) is disordered. The residue at position 569 (serine 569) is a Phosphoserine; by CaMK2D. Serine 585 bears the Phosphoserine mark. A disordered region spans residues 615–655 (ISIPTPPALTPEGESRPPPASPGPNTNIPSIASNVVKVSAL). Over residues 637 to 647 (GPNTNIPSIAS) the composition is skewed to polar residues.

Belongs to the potassium channel family. D (Shal) (TC 1.A.1.2) subfamily. Kv4.3/KCND3 sub-subfamily. Homotetramer. Heterotetramer with KCND2. Associates with the regulatory subunits KCNIP3 and KCNIP4. Interacts with KCNE1, KCNE2, SCN1B and KCNAB1 and DLG1. Component of heteromultimeric potassium channels. Identified in potassium channel complexes containing KCND1, KCND2, KCND3, KCNIP1, KCNIP2, KCNIP3, KCNIP4, DPP6 and DPP10. Interacts with KCNIP1; each KCNIP1 monomer interacts with two adjacent KCND3 subunits, through both the N-terminal inactivation ball of a KCND3 subunit and a C-terminal helix from the adjacent KCND3 subunit, clamping them together; this interaction stabilizes the tetrameric form and modulates the channel gating kinetics namely channel activation and inactivation kinetics and rate of recovery from inactivation. Interacts with DPP6; this interaction modulates the channel gating kinetics namely channel activation and inactivation kinetics and rate of recovery from inactivation. Interacts with KCNIP2; each KCNIP2 monomer interacts with two adjacent KCND3 subunits, through both the N-terminal inactivation ball of a KCND3 subunit and a C-terminal helix from the adjacent KCND3 subunit, clamping them together; this interaction modulates the channel gating kinetics. Post-translationally, regulated through phosphorylation at Ser-569 by CaMK2D. In terms of tissue distribution, highly expressed in heart and brain, in particular in cortex, cerebellum, amygdala and caudate nucleus. Detected at lower levels in liver, skeletal muscle, kidney and pancreas.

The protein localises to the cell membrane. It localises to the sarcolemma. The protein resides in the cell projection. It is found in the dendrite. The enzyme catalyses K(+)(in) = K(+)(out). Its function is as follows. Pore-forming (alpha) subunit of voltage-gated A-type potassium channels that mediates transmembrane potassium transport in excitable membranes, in brain and heart. In cardiomyocytes, may generate the transient outward potassium current I(To). In neurons, may conduct the transient subthreshold somatodendritic A-type potassium current (ISA). Kinetics properties are characterized by fast activation at subthreshold membrane potentials, rapid inactivation, and quick recovery from inactivation. Channel properties are modulated by interactions with regulatory subunits. Interaction with the regulatory subunits KCNIP1 or KCNIP2 modulates the channel gating kinetics namely channel activation and inactivation kinetics and rate of recovery from inactivation. Likewise, interaction with DPP6 modulates the channel gating kinetics namely channel activation and inactivation kinetics. The chain is A-type voltage-gated potassium channel KCND3 (KCND3) from Homo sapiens (Human).